We begin with the raw amino-acid sequence, 292 residues long: MKDIATPNRTKDIVEKYGFSFKKSLGQNFLIDTNVLNRIVDHAEIGSESGAIEIGPGIGALTEQLAKRAKKVVAFEIDQRLLPILDETLAPYSNVTVINKDVLKADVHEVFSEQFEEGQDVMVVANLPYYITTPILFKLLEEKLPVRGFVVMMQKEVGDRLAAKPGTKEYGSLSIAIQYYTEVETVMTVPRTVFVPQPNVDSAIIRLLKRPKPVVEVTDETFFFEVVRASFAQRRKTLMNNLSNNLNGFPKDKELLDRILTEVGIDPKRRGETLSIEEFATLSNALILHKLS.

Residues Asn-28, Leu-30, Gly-55, Glu-76, Asp-101, and Asn-126 each contribute to the S-adenosyl-L-methionine site.

It belongs to the class I-like SAM-binding methyltransferase superfamily. rRNA adenine N(6)-methyltransferase family. RsmA subfamily.

It is found in the cytoplasm. The catalysed reaction is adenosine(1518)/adenosine(1519) in 16S rRNA + 4 S-adenosyl-L-methionine = N(6)-dimethyladenosine(1518)/N(6)-dimethyladenosine(1519) in 16S rRNA + 4 S-adenosyl-L-homocysteine + 4 H(+). Its function is as follows. Specifically dimethylates two adjacent adenosines (A1518 and A1519) in the loop of a conserved hairpin near the 3'-end of 16S rRNA in the 30S particle. May play a critical role in biogenesis of 30S subunits. The chain is Ribosomal RNA small subunit methyltransferase A from Bacillus mycoides (strain KBAB4) (Bacillus weihenstephanensis).